A 160-amino-acid chain; its full sequence is CXXC motif containing zinc binding protein (160 aa).

Zn(2+) contacts are provided by Cys33, Cys36, Cys67, and Cys70. At Ser75 the chain carries Phosphoserine.

This sequence belongs to the UPF0587 family. In terms of assembly, monomer.

In Bos taurus (Bovine), this protein is CXXC motif containing zinc binding protein (CZIB).